A 52-amino-acid chain; its full sequence is Large ribosomal subunit protein eL39 (52 aa).

The protein belongs to the eukaryotic ribosomal protein eL39 family.

The polypeptide is Large ribosomal subunit protein eL39 (Caldivirga maquilingensis (strain ATCC 700844 / DSM 13496 / JCM 10307 / IC-167)).